Consider the following 443-residue polypeptide: Acyl transferase 10 (443 aa).

Active-site proton acceptor residues include histidine 182 and aspartate 386.

Belongs to the plant acyltransferase family.

Its function is as follows. Involved in the incorporation of ferulate into the cell wall. May act as arabinoxylan feruloyl transferase. May function as p-coumaroyl-CoA transferase involved in glucuronoarabinoxylan modification. The chain is Acyl transferase 10 from Oryza sativa subsp. japonica (Rice).